Here is a 185-residue protein sequence, read N- to C-terminus: Translation initiation factor IF-3 (185 aa).

Belongs to the IF-3 family. Monomer.

It is found in the cytoplasm. In terms of biological role, IF-3 binds to the 30S ribosomal subunit and shifts the equilibrium between 70S ribosomes and their 50S and 30S subunits in favor of the free subunits, thus enhancing the availability of 30S subunits on which protein synthesis initiation begins. This chain is Translation initiation factor IF-3, found in Rickettsia prowazekii (strain Madrid E).